Reading from the N-terminus, the 27-residue chain is CD59 glycoprotein (27 aa).

2 disulfide bridges follow: Cys3–Cys25 and Cys6–Cys12. Asn17 carries an N-linked (GlcNAc...) asparagine glycan.

In terms of assembly, interacts with T-cell surface antigen CD2. Post-translationally, N- and O-glycosylated. As to expression, expressed in erythrocytes and lymphocytes. Not detected in platelets.

The protein localises to the cell membrane. The protein resides in the secreted. Functionally, potent inhibitor of the complement membrane attack complex (MAC) action, which protects self-cells from damage during complement activation. Acts by binding to the beta-haipins of C8 (C8A and C8B) components of the assembling MAC, forming an intermolecular beta-sheet that prevents incorporation of the multiple copies of C9 required for complete formation of the osmolytic pore. This is CD59 glycoprotein from Ovis aries (Sheep).